The following is a 280-amino-acid chain: MSSSICVASSRLSLPTLLRNVCRSEFTADLGPRSEYKSFFAMQRAALAYRRIRGPRQFSSLTLADDIPTTSKQPPSRAANVSSVSQPGEPTKTGAGEIRASSHPSEVVSSSPRADSAKRKKASAPEATAGAKPAANESSDKKRSEAPRKSSLSILSKSKKKKEPWQIQKEALKKKFKEGWNPPKKLSPDALEGIRHLHAVAPDRFTTPVLAEQFQVSPEAIRRILKSKWRPSPEEMEKRRERWERRHDRIWSQMTELGLRRPKRSAEKFSDVKVLYDKPV.

Residues 63 to 88 (LADDIPTTSKQPPSRAANVSSVSQPG) show a composition bias toward polar residues. A disordered region spans residues 63–166 (LADDIPTTSK…KSKKKKEPWQ (104 aa)). Composition is skewed to low complexity over residues 101–114 (SSHP…SPRA) and 124–135 (APEATAGAKPAA). Over residues 138 to 148 (SSDKKRSEAPR) the composition is skewed to basic and acidic residues.

It belongs to the RRG9 family.

The protein localises to the mitochondrion. Functionally, required for respiratory activity and maintenance and expression of the mitochondrial genome. The polypeptide is Required for respiratory growth protein 9, mitochondrial (rrg9) (Aspergillus fumigatus (strain CBS 144.89 / FGSC A1163 / CEA10) (Neosartorya fumigata)).